The primary structure comprises 271 residues: NADPH-dependent 7-cyano-7-deazaguanine reductase (271 aa).

79–81 (IES) lines the substrate pocket. Residue 81 to 82 (SK) coordinates NADPH. The Thioimide intermediate role is filled by cysteine 178. The Proton donor role is filled by aspartate 185. A substrate-binding site is contributed by 217-218 (HE). 246–247 (RG) provides a ligand contact to NADPH.

This sequence belongs to the GTP cyclohydrolase I family. QueF type 2 subfamily. Homodimer.

Its subcellular location is the cytoplasm. It catalyses the reaction 7-aminomethyl-7-carbaguanine + 2 NADP(+) = 7-cyano-7-deazaguanine + 2 NADPH + 3 H(+). It participates in tRNA modification; tRNA-queuosine biosynthesis. Functionally, catalyzes the NADPH-dependent reduction of 7-cyano-7-deazaguanine (preQ0) to 7-aminomethyl-7-deazaguanine (preQ1). The sequence is that of NADPH-dependent 7-cyano-7-deazaguanine reductase from Acinetobacter baylyi (strain ATCC 33305 / BD413 / ADP1).